An 80-amino-acid chain; its full sequence is Photosystem II extrinsic protein V (80 aa).

Met47 contributes to the heme binding site.

This sequence belongs to the cytochrome c family. PsbV subfamily. PSII is composed of 1 copy each of membrane proteins PsbA, PsbB, PsbC, PsbD, PsbE, PsbF, PsbH, PsbI, PsbJ, PsbK, PsbL, PsbM, PsbT, PsbY, PsbZ, Psb30/Ycf12, at least 3 peripheral proteins of the oxygen-evolving complex and a large number of cofactors. It forms dimeric complexes. Requires heme as cofactor.

Its subcellular location is the plastid. It is found in the chloroplast thylakoid membrane. Functionally, one of the extrinsic, lumenal subunits of photosystem II (PSII). PSII is a light-driven water plastoquinone oxidoreductase, using light energy to abstract electrons from H(2)O, generating a proton gradient subsequently used for ATP formation. The extrinsic proteins stabilize the structure of photosystem II oxygen-evolving complex (OEC), the ion environment of oxygen evolution and protect the OEC against heat-induced inactivation. The protein is Photosystem II extrinsic protein V of Thalassiosira weissflogii (Marine diatom).